The following is a 360-amino-acid chain: Phosphoserine aminotransferase (360 aa).

R41 serves as a coordination point for L-glutamate. Residues 75 to 76 (AS), W99, T152, D171, and Q194 contribute to the pyridoxal 5'-phosphate site. N6-(pyridoxal phosphate)lysine is present on K195. Position 236-237 (236-237 (NT)) interacts with pyridoxal 5'-phosphate.

It belongs to the class-V pyridoxal-phosphate-dependent aminotransferase family. SerC subfamily. In terms of assembly, homodimer. Requires pyridoxal 5'-phosphate as cofactor.

It localises to the cytoplasm. The catalysed reaction is O-phospho-L-serine + 2-oxoglutarate = 3-phosphooxypyruvate + L-glutamate. It carries out the reaction 4-(phosphooxy)-L-threonine + 2-oxoglutarate = (R)-3-hydroxy-2-oxo-4-phosphooxybutanoate + L-glutamate. Its pathway is amino-acid biosynthesis; L-serine biosynthesis; L-serine from 3-phospho-D-glycerate: step 2/3. The protein operates within cofactor biosynthesis; pyridoxine 5'-phosphate biosynthesis; pyridoxine 5'-phosphate from D-erythrose 4-phosphate: step 3/5. In terms of biological role, catalyzes the reversible conversion of 3-phosphohydroxypyruvate to phosphoserine and of 3-hydroxy-2-oxo-4-phosphonooxybutanoate to phosphohydroxythreonine. This chain is Phosphoserine aminotransferase, found in Porphyromonas gingivalis (strain ATCC 33277 / DSM 20709 / CIP 103683 / JCM 12257 / NCTC 11834 / 2561).